The following is a 426-amino-acid chain: Elongation factor Tu, mitochondrial (426 aa).

Residues 1–27 constitute a mitochondrion transit peptide; it reads MFKNLAGSFRAVSRVAFKTRPSLVRSY. One can recognise a tr-type G domain in the interval 34-230; the sequence is KPHVNIGTIG…AVDEHIPTPT (197 aa). The interval 43-50 is G1; that stretch reads GHVDHGKT. Residue 43-50 coordinates GTP; sequence GHVDHGKT. The G2 stretch occupies residues 84-88; it reads GITIS. The segment at 105–108 is G3; it reads DCPG. GTP-binding positions include 105 to 109 and 160 to 163; these read DCPGH and NKVD. The G4 stretch occupies residues 160-163; sequence NKVD. Positions 198-200 are G5; the sequence is SAL.

It belongs to the TRAFAC class translation factor GTPase superfamily. Classic translation factor GTPase family. EF-Tu/EF-1A subfamily.

The protein resides in the mitochondrion. Its pathway is protein biosynthesis; polypeptide chain elongation. Its function is as follows. G-protein that, in its active GTP-bound form, binds to and delivers aminoacyl-tRNA to the A-site of ribosomes during protein biosynthesis. In the presence of a correct codon-anticodon match between the aminoacyl-tRNA and the A-site codon of the ribosome-bound mRNA, the ribosome acts as a GTPase activator and the GTP is hydrolyzed. The inactive GDP-bound form leaves the ribosome and must be recycled before binding another molecule of aminoacyl-tRNA. Required for mitochondrial protein biosynthesis and maintenance of mitochondrial DNA. In Meyerozyma guilliermondii (strain ATCC 6260 / CBS 566 / DSM 6381 / JCM 1539 / NBRC 10279 / NRRL Y-324) (Yeast), this protein is Elongation factor Tu, mitochondrial (TUF1).